The chain runs to 473 residues: Cysteine--tRNA ligase (473 aa).

C28 contacts Zn(2+). The 'HIGH' region motif lies at M30–H40. The Zn(2+) site is built by C212, H237, and E241. The short motif at K277–S281 is the 'KMSKS' region element. An ATP-binding site is contributed by K280.

The protein belongs to the class-I aminoacyl-tRNA synthetase family. Monomer. The cofactor is Zn(2+).

It localises to the cytoplasm. It carries out the reaction tRNA(Cys) + L-cysteine + ATP = L-cysteinyl-tRNA(Cys) + AMP + diphosphate. This Polynucleobacter necessarius subsp. necessarius (strain STIR1) protein is Cysteine--tRNA ligase.